The following is a 72-amino-acid chain: Translational regulator CsrA (72 aa).

This sequence belongs to the CsrA/RsmA family. As to quaternary structure, homodimer; the beta-strands of each monomer intercalate to form a hydrophobic core, while the alpha-helices form wings that extend away from the core.

It localises to the cytoplasm. A translational regulator that binds mRNA to regulate translation initiation and/or mRNA stability. Usually binds in the 5'-UTR at or near the Shine-Dalgarno sequence preventing ribosome-binding, thus repressing translation. Its main target seems to be the major flagellin gene, while its function is anatagonized by FliW. The protein is Translational regulator CsrA of Agathobacter rectalis (strain ATCC 33656 / DSM 3377 / JCM 17463 / KCTC 5835 / VPI 0990) (Eubacterium rectale).